We begin with the raw amino-acid sequence, 55 residues long: uncharacterized protein (55 aa).

This is an uncharacterized protein from Orgyia pseudotsugata multicapsid polyhedrosis virus (OpMNPV).